The sequence spans 280 residues: Tumor necrosis factor ligand superfamily member 6 (280 aa).

The Cytoplasmic portion of the chain corresponds to Met-1 to Leu-80. The segment at Ser-20–Leu-70 is disordered. A compositionally biased stretch (pro residues) spans Arg-43–Pro-69. Residues Cys-81–Phe-101 traverse the membrane as a helical; Signal-anchor for type II membrane protein segment. Residues Gln-102 to Leu-280 are Extracellular-facing. Residues Thr-117–Arg-155 form a disordered region. In terms of domain architecture, THD spans Lys-144–Leu-280. Asn-183 is a glycosylation site (N-linked (GlcNAc...) asparagine). Cys-201 and Cys-232 are oxidised to a cystine. Asn-249 and Asn-259 each carry an N-linked (GlcNAc...) asparagine glycan.

Belongs to the tumor necrosis factor family. In terms of assembly, homotrimer. Interacts with ARHGAP9, BAIAP2L1, BTK, CACNB3, CACNB4, CRK, DLG2, DNMBP, DOCK4, EPS8L3, FGR, FYB1, FYN, HCK, ITK, ITSN2, KALRN, LYN, MACC1, MIA, MPP4, MYO15A, NCF1, NCK1, NCK2, NCKIPSD, OSTF1, PIK3R1, PSTPIP1, RIMBP3C, SAMSN1, SH3GL3, SH3PXD2B, SH3PXD2A, SH3RF2, SKAP2, SNX33, SNX9, SORBS3, SPTA1, SRC, SRGAP1, SRGAP2, SRGAP3, TEC, TJP3 and YES1. The soluble form derives from the membrane form by proteolytic processing. The membrane-bound form undergoes two successive intramembrane proteolytic cleavages. The first one is processed by ADAM10 producing an N-terminal fragment, which lacks the receptor-binding extracellular domain. This ADAM10-processed FasL (FasL APL) remnant form is still membrane anchored and further processed by SPPL2A that liberates the FasL intracellular domain (FasL ICD). FasL shedding by ADAM10 is a prerequisite for subsequent intramembrane cleavage by SPPL2A in T-cells. Post-translationally, phosphorylated by FGR on tyrosine residues; this is required for ubiquitination and subsequent internalization. In terms of processing, N-glycosylated. Glycosylation enhances apoptotic activity. Monoubiquitinated.

The protein resides in the cell membrane. Its subcellular location is the cytoplasmic vesicle lumen. It localises to the lysosome lumen. It is found in the secreted. The protein localises to the nucleus. Cytokine that binds to TNFRSF6/FAS, a receptor that transduces the apoptotic signal into cells. Involved in cytotoxic T-cell-mediated apoptosis, natural killer cell-mediated apoptosis and in T-cell development. Initiates fratricidal/suicidal activation-induced cell death (AICD) in antigen-activated T-cells contributing to the termination of immune responses. TNFRSF6/FAS-mediated apoptosis has also a role in the induction of peripheral tolerance. Binds to TNFRSF6B/DcR3, a decoy receptor that blocks apoptosis. In terms of biological role, induces FAS-mediated activation of NF-kappa-B, initiating non-apoptotic signaling pathways. Can induce apoptosis but does not appear to be essential for this process. Functionally, cytoplasmic form induces gene transcription inhibition. This is Tumor necrosis factor ligand superfamily member 6 (FASLG) from Macaca fascicularis (Crab-eating macaque).